Consider the following 127-residue polypeptide: Apolipoprotein C-IV (127 aa).

The N-terminal stretch at M1–C27 is a signal peptide.

This sequence belongs to the apolipoprotein C4 family.

The protein resides in the secreted. May participate in lipoprotein metabolism. This is Apolipoprotein C-IV (APOC4) from Papio hamadryas (Hamadryas baboon).